The sequence spans 196 residues: MNGKQCFCFFLFHLFYTGLFACGKPESSLAPEYFDLAHAYVQLHRYDEARDYYMRAARDPAYYHAAQYNFARVCGLQNDWKTAVHALQPLYDADSANATIAAAYAYALLSFGETARALLLYQQLYERDQKNTQRILEYANVLVHAKKYIQAVEFLRQKKSLLSEAEDVRVLQSIVRKLKDSVPPHLIADFVSTDDL.

An N-terminal signal peptide occupies residues 1 to 21; the sequence is MNGKQCFCFFLFHLFYTGLFA. Cys-22 is lipidated: N-palmitoyl cysteine. The S-diacylglycerol cysteine moiety is linked to residue Cys-22.

It localises to the cell membrane. This is an uncharacterized protein from Treponema pallidum (strain Nichols).